Consider the following 107-residue polypeptide: Small ribosomal subunit protein uS10m (107 aa).

Belongs to the universal ribosomal protein uS10 family.

The protein resides in the mitochondrion. The protein is Small ribosomal subunit protein uS10m (RPS10) of Prototheca wickerhamii.